Here is a 369-residue protein sequence, read N- to C-terminus: Anthranilate phosphoribosyltransferase (369 aa).

5-phospho-alpha-D-ribose 1-diphosphate-binding positions include Gly-85, 88-89, Thr-93, 95-98, 113-121, and Ser-125; these read GD, NLST, and KHGNRAASS. Gly-85 is an anthranilate binding site. Position 97 (Ser-97) interacts with Mg(2+). Asn-116 lines the anthranilate pocket. Position 171 (Arg-171) interacts with anthranilate. Residues Asp-229 and Glu-230 each coordinate Mg(2+).

It belongs to the anthranilate phosphoribosyltransferase family. As to quaternary structure, homodimer. Mg(2+) serves as cofactor.

It catalyses the reaction N-(5-phospho-beta-D-ribosyl)anthranilate + diphosphate = 5-phospho-alpha-D-ribose 1-diphosphate + anthranilate. It functions in the pathway amino-acid biosynthesis; L-tryptophan biosynthesis; L-tryptophan from chorismate: step 2/5. In terms of biological role, catalyzes the transfer of the phosphoribosyl group of 5-phosphorylribose-1-pyrophosphate (PRPP) to anthranilate to yield N-(5'-phosphoribosyl)-anthranilate (PRA). The polypeptide is Anthranilate phosphoribosyltransferase (Frankia alni (strain DSM 45986 / CECT 9034 / ACN14a)).